The following is a 71-amino-acid chain: Long neurotoxin 1 (71 aa).

5 disulfide bridges follow: Cys-3-Cys-21, Cys-14-Cys-42, Cys-27-Cys-31, Cys-46-Cys-57, and Cys-58-Cys-63.

It belongs to the three-finger toxin family. Long-chain subfamily. Type II alpha-neurotoxin sub-subfamily. As to expression, expressed by the venom gland.

The protein localises to the secreted. Binds with high affinity to muscular (alpha-1/CHRNA1) and neuronal (alpha-7/CHRNA7) nicotinic acetylcholine receptor (nAChR) and inhibits acetylcholine from binding to the receptor, thereby impairing neuromuscular and neuronal transmission. This is Long neurotoxin 1 from Naja melanoleuca (Forest cobra).